Reading from the N-terminus, the 357-residue chain is Inositol-tetrakisphosphate 1-kinase 3 (357 aa).

Residues lysine 56 and lysine 98 each coordinate 1D-myo-inositol 1,3,4-trisphosphate. Positions 133 and 183 each coordinate ATP. Residues histidine 190 and lysine 222 each coordinate 1D-myo-inositol 1,3,4-trisphosphate. Residues 211–222 (QEFVNHGGVLFK), serine 237, and serine 262 contribute to the ATP site. Mg(2+) is bound by residues aspartate 302, aspartate 317, and asparagine 319. A 1D-myo-inositol 1,3,4-trisphosphate-binding site is contributed by asparagine 319.

This sequence belongs to the ITPK1 family. As to quaternary structure, monomer. The cofactor is Mg(2+).

It catalyses the reaction 1D-myo-inositol 3,4,5,6-tetrakisphosphate + ATP = 1D-myo-inositol 1,3,4,5,6-pentakisphosphate + ADP + H(+). The catalysed reaction is 1D-myo-inositol 1,3,4-trisphosphate + ATP = 1D-myo-inositol 1,3,4,5-tetrakisphosphate + ADP + H(+). The enzyme catalyses 1D-myo-inositol 1,3,4-trisphosphate + ATP = 1D-myo-inositol 1,3,4,6-tetrakisphosphate + ADP + H(+). Functionally, kinase that can phosphorylate various inositol polyphosphate such as Ins(3,4,5,6)P4 or Ins(1,3,4)P3 and participates in phytic acid biosynthesis in developing seeds. Phytic acid is the primary storage form of phosphorus in cereal grains and other plant seeds. The sequence is that of Inositol-tetrakisphosphate 1-kinase 3 (ITPK3) from Oryza sativa subsp. indica (Rice).